Consider the following 311-residue polypeptide: MTTVSPRPRMARRALDGVLLLDKPVGLSSNDALMRAKRLYQAKKAGHTGTLDPLASGLLPLCFGEATKFSQDLLEADKTYEATMRLGVRTTTGDAEGDVLDTRDVSCDEAAVRAALARFVGEIVQVPPMYSALKRDGKPLYEYARAGQTVEREGRTVTIRALALVSCALPDVTFRVTCSKGTYVRTLAEDIGEALGCGAHLTMLRRTGVGPLTLEHAVTLDALDAATQDERDARLAPVDALLSTFPCVKLDAALATRFLHGQRLKLSELAARPDAAEGGRVRVYDADDRLLGVARASEGVLAPERLVVTGA.

The active-site Nucleophile is the Asp52.

Belongs to the pseudouridine synthase TruB family. Type 1 subfamily.

It catalyses the reaction uridine(55) in tRNA = pseudouridine(55) in tRNA. Responsible for synthesis of pseudouridine from uracil-55 in the psi GC loop of transfer RNAs. In Burkholderia mallei (strain ATCC 23344), this protein is tRNA pseudouridine synthase B.